We begin with the raw amino-acid sequence, 348 residues long: 3-isopropylmalate dehydrogenase (348 aa).

An NAD(+)-binding site is contributed by 76–87; it reads GPKWTDPNNRPE. Arg-94, Arg-104, Arg-132, and Asp-217 together coordinate substrate. Mg(2+) contacts are provided by Asp-217, Asp-241, and Asp-245. Residue 275-287 participates in NAD(+) binding; that stretch reads GSAPDIAGKNVAN.

The protein belongs to the isocitrate and isopropylmalate dehydrogenases family. LeuB type 1 subfamily. As to quaternary structure, homodimer. The cofactor is Mg(2+). Mn(2+) is required as a cofactor.

Its subcellular location is the cytoplasm. It catalyses the reaction (2R,3S)-3-isopropylmalate + NAD(+) = 4-methyl-2-oxopentanoate + CO2 + NADH. Its pathway is amino-acid biosynthesis; L-leucine biosynthesis; L-leucine from 3-methyl-2-oxobutanoate: step 3/4. In terms of biological role, catalyzes the oxidation of 3-carboxy-2-hydroxy-4-methylpentanoate (3-isopropylmalate) to 3-carboxy-4-methyl-2-oxopentanoate. The product decarboxylates to 4-methyl-2 oxopentanoate. The sequence is that of 3-isopropylmalate dehydrogenase from Staphylococcus aureus (strain COL).